Here is an 87-residue protein sequence, read N- to C-terminus: Small ribosomal subunit protein bS20 (87 aa).

The segment covering 1–12 (MANHKSALKRNR) has biased composition (basic residues). A disordered region spans residues 1–21 (MANHKSALKRNRQAAVRNARN).

The protein belongs to the bacterial ribosomal protein bS20 family.

In terms of biological role, binds directly to 16S ribosomal RNA. The protein is Small ribosomal subunit protein bS20 of Syntrophotalea carbinolica (strain DSM 2380 / NBRC 103641 / GraBd1) (Pelobacter carbinolicus).